The sequence spans 598 residues: Beta-myrcene/(E)-beta-ocimene synthase 2, chloroplastic (598 aa).

A chloroplast-targeting transit peptide spans 1 to 30 (MATLCIGSAPIYQNACIHNFRLQRPRRFIS). 5 residues coordinate (2E)-geranyl diphosphate: Arg307, Asp344, Asp348, Arg486, and Asn489. Residues Asp344 and Asp348 each contribute to the Mg(2+) site. The DDXXD motif motif lies at 344–348 (DDIYD). Asn489, Thr493, and Glu497 together coordinate Mg(2+).

Belongs to the terpene synthase family. Tpsb subfamily. Mg(2+) serves as cofactor. The cofactor is Mn(2+). As to expression, expressed exclusively in mature flowers, but not in inmmature buds.

It localises to the plastid. The protein localises to the chloroplast. The enzyme catalyses (2E)-geranyl diphosphate = beta-myrcene + diphosphate. It functions in the pathway secondary metabolite biosynthesis; terpenoid biosynthesis. Involved in monoterpene (C10) biosynthesis. The major products are alpha- and beta-pinene, sabinene, beta-myrcene, (E)-beta-ocimene and limonene. The polypeptide is Beta-myrcene/(E)-beta-ocimene synthase 2, chloroplastic (TPS24) (Arabidopsis thaliana (Mouse-ear cress)).